Here is a 262-residue protein sequence, read N- to C-terminus: 5'-nucleotidase SurE (262 aa).

The a divalent metal cation site is built by Asp11, Asp12, Ser43, and Asn101.

This sequence belongs to the SurE nucleotidase family. The cofactor is a divalent metal cation.

The protein resides in the cytoplasm. It catalyses the reaction a ribonucleoside 5'-phosphate + H2O = a ribonucleoside + phosphate. Nucleotidase that shows phosphatase activity on nucleoside 5'-monophosphates. This is 5'-nucleotidase SurE from Prochlorococcus marinus (strain NATL2A).